Reading from the N-terminus, the 102-residue chain is Flagellar hook-basal body complex protein FliE (102 aa).

It belongs to the FliE family.

The protein localises to the bacterial flagellum basal body. The sequence is that of Flagellar hook-basal body complex protein FliE from Halalkalibacterium halodurans (strain ATCC BAA-125 / DSM 18197 / FERM 7344 / JCM 9153 / C-125) (Bacillus halodurans).